The primary structure comprises 97 residues: RNA-binding protein Hfq (97 aa).

The region spanning 10-70 is the Sm domain; sequence DPFLNALRKE…ISTIVPARSV (61 aa).

The protein belongs to the Hfq family. In terms of assembly, homohexamer.

RNA chaperone that binds small regulatory RNA (sRNAs) and mRNAs to facilitate mRNA translational regulation in response to envelope stress, environmental stress and changes in metabolite concentrations. Also binds with high specificity to tRNAs. The protein is RNA-binding protein Hfq of Neisseria gonorrhoeae (strain ATCC 700825 / FA 1090).